Reading from the N-terminus, the 557-residue chain is NADP-dependent malic enzyme (557 aa).

The Proton donor role is filled by Tyr-91. Arg-144 contributes to the NADP(+) binding site. Substrate is bound by residues Arg-144 and Lys-162. The active-site Proton acceptor is the Lys-162. Mn(2+) is bound by residues Glu-234 and Asp-235. Asn-238 lines the NADP(+) pocket. Asp-258 lines the Mn(2+) pocket. Residues 291-294, Ser-325, Asn-397, and Asn-443 each bind NADP(+); that span reads AGEA. Asn-443 contributes to the substrate binding site.

The protein belongs to the malic enzymes family. As to quaternary structure, homotetramer. Mg(2+) serves as cofactor. It depends on Mn(2+) as a cofactor. In terms of processing, the N-terminus is blocked.

It localises to the cytoplasm. The enzyme catalyses (S)-malate + NADP(+) = pyruvate + CO2 + NADPH. The catalysed reaction is oxaloacetate + H(+) = pyruvate + CO2. This Columba livia (Rock dove) protein is NADP-dependent malic enzyme (ME1).